A 352-amino-acid chain; its full sequence is Chorismate synthase (352 aa).

An NADP(+)-binding site is contributed by Arg-48. Residues 125–127, 238–239, Gly-278, 293–297, and Arg-319 each bind FMN; these read RSS, NA, and KPTSS.

It belongs to the chorismate synthase family. Homotetramer. FMNH2 is required as a cofactor.

It catalyses the reaction 5-O-(1-carboxyvinyl)-3-phosphoshikimate = chorismate + phosphate. It participates in metabolic intermediate biosynthesis; chorismate biosynthesis; chorismate from D-erythrose 4-phosphate and phosphoenolpyruvate: step 7/7. Its function is as follows. Catalyzes the anti-1,4-elimination of the C-3 phosphate and the C-6 proR hydrogen from 5-enolpyruvylshikimate-3-phosphate (EPSP) to yield chorismate, which is the branch point compound that serves as the starting substrate for the three terminal pathways of aromatic amino acid biosynthesis. This reaction introduces a second double bond into the aromatic ring system. The sequence is that of Chorismate synthase from Legionella pneumophila (strain Paris).